Here is a 284-residue protein sequence, read N- to C-terminus: 2-dehydro-3-deoxyphosphooctonate aldolase (284 aa).

This sequence belongs to the KdsA family.

It is found in the cytoplasm. The catalysed reaction is D-arabinose 5-phosphate + phosphoenolpyruvate + H2O = 3-deoxy-alpha-D-manno-2-octulosonate-8-phosphate + phosphate. Its pathway is carbohydrate biosynthesis; 3-deoxy-D-manno-octulosonate biosynthesis; 3-deoxy-D-manno-octulosonate from D-ribulose 5-phosphate: step 2/3. The protein operates within bacterial outer membrane biogenesis; lipopolysaccharide biosynthesis. This is 2-dehydro-3-deoxyphosphooctonate aldolase from Synechococcus sp. (strain ATCC 27144 / PCC 6301 / SAUG 1402/1) (Anacystis nidulans).